The chain runs to 1905 residues: Low-density lipoprotein receptor-related protein 4 (1905 aa).

The first 20 residues, 1 to 20, serve as a signal peptide directing secretion; the sequence is MRRWWGALLLGALLCAHGTA. Topologically, residues 21–1723 are extracellular; sequence SNLECACGRS…VPAAPGEGLH (1703 aa). LDL-receptor class A domains are found at residues 26–67, 70–106, 109–144, 147–183, 190–226, 230–266, 269–305, and 311–350; these read ACGR…DGCT, TCSPLDFHCDNGKCIRRSWVCDGDNDCEDDSDEQDCP, ECEEDEFPCQNGYCIRSLWHCDGDNDCGDNSDEQCD, KCSDKEFRCSDGSCIAEHWYCDGDTDCKDGSDEESCP, PCNLEEFQCAYGRCILDIYHCDGDDDCGDWSDESDCS, PCRSGEFMCDSGLCVNAGWRCDGDADCDDQSDERNCT, MCTAEQFRCRSGRCVRLSWRCDGEDDCADNSDEENCE, and QCASDQFLCWNGRCIGQRKLCNGVNDCGDNSDESPQQNCR. Disulfide bonds link Cys-27–Cys-44, Cys-34–Cys-57, Cys-51–Cys-66, Cys-71–Cys-83, Cys-78–Cys-96, Cys-90–Cys-105, Cys-110–Cys-122, Cys-117–Cys-135, Cys-129–Cys-143, Cys-148–Cys-160, Cys-155–Cys-173, Cys-167–Cys-182, Cys-191–Cys-203, Cys-198–Cys-216, Cys-210–Cys-225, Cys-231–Cys-243, Cys-238–Cys-256, Cys-250–Cys-265, Cys-270–Cys-282, Cys-277–Cys-295, Cys-289–Cys-304, Cys-312–Cys-324, Cys-319–Cys-337, Cys-331–Cys-349, Cys-358–Cys-369, Cys-365–Cys-378, Cys-380–Cys-393, Cys-399–Cys-409, Cys-405–Cys-418, and Cys-420–Cys-433. The N-linked (GlcNAc...) asparagine glycan is linked to Asn-264. Residues 354-394 enclose the EGF-like 1; atypical domain; that stretch reads GEENCNVNNGGCAQKCQMIRGAVQCTCHTGYRLTEDGRTCQ. One can recognise an EGF-like 2; calcium-binding domain in the interval 395-434; that stretch reads DVNECAEEGYCSQGCTNSEGAFQCWCEAGYELRPDRRSCK. 5 LDL-receptor class B repeats span residues 480-522, 523-565, 566-609, 610-652, and 653-693; these read ELVF…DWVH, DKLY…HPME, GTIY…DYAG, RRMY…FEDS, and LYWT…LHPQ. Residue Asn-498 is glycosylated (N-linked (GlcNAc...) asparagine). The 40-residue stretch at 698–737 folds into the EGF-like 3 domain; that stretch reads GKNRCGDNNGGCTHLCLPSGQNYTCACPTGFRKINSHACA. Cystine bridges form between Cys-702–Cys-713, Cys-709–Cys-722, and Cys-724–Cys-736. Asn-719 is a glycosylation site (N-linked (GlcNAc...) asparagine). LDL-receptor class B repeat units follow at residues 785–827, 828–870, 871–914, 915–956, and 957–998; these read DHVY…DWVT, NKLY…EPMG, GYMY…DYGS, QRLY…LYGQ, and RIYW…FHRQ. An N-linked (GlcNAc...) asparagine glycan is attached at Asn-901. The N-linked (GlcNAc...) asparagine glycan is linked to Asn-1077. 10 LDL-receptor class B repeats span residues 1093 to 1135, 1136 to 1178, 1179 to 1222, 1223 to 1263, 1264 to 1306, 1397 to 1439, 1440 to 1482, 1483 to 1526, 1527 to 1568, and 1569 to 1610; these read GKVY…DAIG, RKVY…YHEM, GFMY…DKTS, SQLL…LLDS, YIYW…DRAQ, GKVY…DWVA, RNLY…FPRK, GYLF…DYDT, RRIY…QDRW, and IYWT…SPQR. N-linked (GlcNAc...) asparagine glycans are attached at residues Asn-1415 and Asn-1467. Positions 1659–1696 are disordered; it reads PRATSLNEKSPVLPNTLPTTLHSSTTRTRTSPEGAEGR. Residues 1671–1690 show a composition bias toward low complexity; the sequence is LPNTLPTTLHSSTTRTRTSP. The helical transmembrane segment at 1724–1746 threads the bilayer; that stretch reads VSYAVGGLLSVLLILLVTAALML. Residues 1747-1905 are Cytoplasmic-facing; it reads YRHRKSKFTD…ERKLSSESQV (159 aa). The tract at residues 1853-1905 is disordered; it reads SSGSLDDTETEQLLQEEQSECSSVHTATTPERRGSLPDTGWKHERKLSSESQV. The segment covering 1872 to 1881 has biased composition (polar residues); sequence ECSSVHTATT. Residues 1882–1905 are compositionally biased toward basic and acidic residues; sequence PERRGSLPDTGWKHERKLSSESQV.

Belongs to the LDLR family. Homooligomer. Interacts with MUSK; the heterodimer forms an AGRIN receptor complex that binds AGRIN resulting in activation of MUSK. Interacts (via the extracellular domain) with SOST; the interaction facilitates the inhibition of Wnt signaling. Interacts with MESD; the interaction promotes glycosylation of LRP4 and its cell-surface expression. N-glycosylation is required for cell surface location. Expressed in different regions of the brain, mainly in the olfactory bulb, at lower level in the cerebral cortex and hippocampus.

Its subcellular location is the cell membrane. Its function is as follows. Mediates SOST-dependent inhibition of bone formation. Functions as a specific facilitator of SOST-mediated inhibition of Wnt signaling. Plays a key role in the formation and the maintenance of the neuromuscular junction (NMJ), the synapse between motor neuron and skeletal muscle. Directly binds AGRIN and recruits it to the MUSK signaling complex. Mediates the AGRIN-induced phosphorylation of MUSK, the kinase of the complex. The activation of MUSK in myotubes induces the formation of NMJ by regulating different processes including the transcription of specific genes and the clustering of AChR in the postsynaptic membrane. Alternatively, may be involved in the negative regulation of the canonical Wnt signaling pathway, being able to antagonize the LRP6-mediated activation of this pathway. More generally, has been proposed to function as a cell surface endocytic receptor binding and internalizing extracellular ligands for degradation by lysosomes. Plays an essential role in the process of digit differentiation. This chain is Low-density lipoprotein receptor-related protein 4 (Lrp4), found in Rattus norvegicus (Rat).